Reading from the N-terminus, the 340-residue chain is Selenide, water dikinase (340 aa).

The active site involves C13. ATP contacts are provided by residues K16 and A43–D45. D46 is a Mg(2+) binding site. ATP-binding positions include D63, D86, and G133–S135. D86 is a binding site for Mg(2+). D221 provides a ligand contact to Mg(2+).

The protein belongs to the selenophosphate synthase 1 family. Class I subfamily. Homodimer. The cofactor is Mg(2+).

It carries out the reaction hydrogenselenide + ATP + H2O = selenophosphate + AMP + phosphate + 2 H(+). Its function is as follows. Synthesizes selenophosphate from selenide and ATP. This is Selenide, water dikinase from Desulfitobacterium hafniense (strain Y51).